A 295-amino-acid polypeptide reads, in one-letter code: Lipoyl synthase (295 aa).

The [4Fe-4S] cluster site is built by C34, C39, C45, C60, C64, C67, and S273. The Radical SAM core domain maps to 46-262 (WNKRHATIMV…KRMAYAKGFS (217 aa)).

This sequence belongs to the radical SAM superfamily. Lipoyl synthase family. [4Fe-4S] cluster serves as cofactor.

It is found in the cytoplasm. The catalysed reaction is [[Fe-S] cluster scaffold protein carrying a second [4Fe-4S](2+) cluster] + N(6)-octanoyl-L-lysyl-[protein] + 2 oxidized [2Fe-2S]-[ferredoxin] + 2 S-adenosyl-L-methionine + 4 H(+) = [[Fe-S] cluster scaffold protein] + N(6)-[(R)-dihydrolipoyl]-L-lysyl-[protein] + 4 Fe(3+) + 2 hydrogen sulfide + 2 5'-deoxyadenosine + 2 L-methionine + 2 reduced [2Fe-2S]-[ferredoxin]. Its pathway is protein modification; protein lipoylation via endogenous pathway; protein N(6)-(lipoyl)lysine from octanoyl-[acyl-carrier-protein]: step 2/2. Catalyzes the radical-mediated insertion of two sulfur atoms into the C-6 and C-8 positions of the octanoyl moiety bound to the lipoyl domains of lipoate-dependent enzymes, thereby converting the octanoylated domains into lipoylated derivatives. This Anaplasma phagocytophilum (strain HZ) protein is Lipoyl synthase.